The chain runs to 496 residues: Cytochrome P450 71D179 (496 aa).

The helical; Signal-anchor for type II membrane protein transmembrane segment at 1–21 threads the bilayer; it reads MDISISWVVIIVSVLSYLILM. C435 is a heme binding site.

Belongs to the cytochrome P450 family. Requires heme as cofactor.

The protein resides in the membrane. The protein operates within secondary metabolite biosynthesis; terpenoid biosynthesis. Functionally, involved in the biosynthesis of phenolic monoterpenes natural products thymol and carvacrol which have a broad range of biological activities acting as antimicrobial compounds, insecticides, antioxidants and pharmaceutical agents. Catalyzes probably the C3-hydroxylation of gamma-terpinene to produce thymol. This Thymus vulgaris (Thyme) protein is Cytochrome P450 71D179.